We begin with the raw amino-acid sequence, 1129 residues long: BLOC-2 complex member HPS5 (1129 aa).

The tract at residues 483–503 is disordered; sequence EFTSQQEEDLPDQCCGSHGNE. S532 and S534 each carry phosphoserine. Residues 561 to 609 are disordered; the sequence is HTSPDLKVRPELRGDEQSCEEDVSSDTCPKEEDTEEEKEVTSPPPEEDR. The span at 564 to 576 shows a compositional bias: basic and acidic residues; that stretch reads PDLKVRPELRGDE. A Phosphoserine modification is found at S695.

This sequence belongs to the HPS5 family. As to quaternary structure, component of the biogenesis of lysosome-related organelles complex-2 (or BLOC2) composed of HPS3, HPS5 and HPS6. Interacts with HPS6. Interacts with HPS3. May interact with all alpha-integrin chains that have an aromatic residue before the first lysine of the conserved KXGFFKR motif, including ITGA2, ITGA3, ITGA5 and ITGA6. In terms of tissue distribution, widely expressed. Isoform 1:Highly expressed in lungs and testis. Isoform 2:Highly expressed in placenta, kidney, testis ovary, lung and thymus.

It localises to the cytoplasm. The protein resides in the cytosol. May regulate the synthesis and function of lysosomes and of highly specialized organelles, such as melanosomes and platelet dense granules. Regulates intracellular vesicular trafficking in fibroblasts. May be involved in the regulation of general functions of integrins. This chain is BLOC-2 complex member HPS5 (HPS5), found in Homo sapiens (Human).